A 236-amino-acid chain; its full sequence is Ribose-5-phosphate isomerase A (236 aa).

Residues 33 to 36, 90 to 93, and 103 to 106 contribute to the substrate site; these read TGST, DGAD, and KGGG. The Proton acceptor role is filled by Glu-112. A substrate-binding site is contributed by Lys-130.

This sequence belongs to the ribose 5-phosphate isomerase family. Homodimer.

The enzyme catalyses aldehydo-D-ribose 5-phosphate = D-ribulose 5-phosphate. The protein operates within carbohydrate degradation; pentose phosphate pathway; D-ribose 5-phosphate from D-ribulose 5-phosphate (non-oxidative stage): step 1/1. In terms of biological role, catalyzes the reversible conversion of ribose-5-phosphate to ribulose 5-phosphate. This chain is Ribose-5-phosphate isomerase A, found in Nostoc sp. (strain PCC 7120 / SAG 25.82 / UTEX 2576).